A 425-amino-acid polypeptide reads, in one-letter code: Serine--tRNA ligase (425 aa).

Residue 230-232 (TAE) coordinates L-serine. 261 to 263 (RSE) is an ATP binding site. Glu-284 lines the L-serine pocket. 348 to 351 (EISS) contacts ATP. Position 384 (Ser-384) interacts with L-serine.

This sequence belongs to the class-II aminoacyl-tRNA synthetase family. Type-1 seryl-tRNA synthetase subfamily. As to quaternary structure, homodimer. The tRNA molecule binds across the dimer.

It is found in the cytoplasm. The catalysed reaction is tRNA(Ser) + L-serine + ATP = L-seryl-tRNA(Ser) + AMP + diphosphate + H(+). It catalyses the reaction tRNA(Sec) + L-serine + ATP = L-seryl-tRNA(Sec) + AMP + diphosphate + H(+). It functions in the pathway aminoacyl-tRNA biosynthesis; selenocysteinyl-tRNA(Sec) biosynthesis; L-seryl-tRNA(Sec) from L-serine and tRNA(Sec): step 1/1. Functionally, catalyzes the attachment of serine to tRNA(Ser). Is also able to aminoacylate tRNA(Sec) with serine, to form the misacylated tRNA L-seryl-tRNA(Sec), which will be further converted into selenocysteinyl-tRNA(Sec). In Streptococcus equi subsp. equi (strain 4047), this protein is Serine--tRNA ligase.